The chain runs to 444 residues: Trigger factor (444 aa).

The region spanning 166 to 251 (GDQVVIDFKG…VKAVKAPKAA (86 aa)) is the PPIase FKBP-type domain.

This sequence belongs to the FKBP-type PPIase family. Tig subfamily.

It is found in the cytoplasm. The catalysed reaction is [protein]-peptidylproline (omega=180) = [protein]-peptidylproline (omega=0). Functionally, involved in protein export. Acts as a chaperone by maintaining the newly synthesized protein in an open conformation. Functions as a peptidyl-prolyl cis-trans isomerase. The sequence is that of Trigger factor from Cereibacter sphaeroides (strain ATCC 17029 / ATH 2.4.9) (Rhodobacter sphaeroides).